The following is a 60-amino-acid chain: Large ribosomal subunit protein bL32 (60 aa).

This sequence belongs to the bacterial ribosomal protein bL32 family.

This chain is Large ribosomal subunit protein bL32 (rpmF), found in Borreliella burgdorferi (strain ATCC 35210 / DSM 4680 / CIP 102532 / B31) (Borrelia burgdorferi).